The following is a 343-amino-acid chain: Selenide, water dikinase (343 aa).

The active site involves selenocysteine 16. Position 16 (selenocysteine 16) is a non-standard amino acid, selenocysteine. Residues lysine 19 and 46-48 each bind ATP; that span reads GAE. A Mg(2+)-binding site is contributed by aspartate 49. ATP-binding positions include aspartate 66, aspartate 89, and 137–139; that span reads GHT. Aspartate 89 serves as a coordination point for Mg(2+). Residue aspartate 225 participates in Mg(2+) binding.

This sequence belongs to the selenophosphate synthase 1 family. Class I subfamily. As to quaternary structure, homodimer. Mg(2+) is required as a cofactor.

It carries out the reaction hydrogenselenide + ATP + H2O = selenophosphate + AMP + phosphate + 2 H(+). Synthesizes selenophosphate from selenide and ATP. This chain is Selenide, water dikinase, found in Geobacter sp. (strain M21).